A 345-amino-acid chain; its full sequence is Phenylalanine--tRNA ligase alpha subunit (345 aa).

Glu-253 provides a ligand contact to Mg(2+).

This sequence belongs to the class-II aminoacyl-tRNA synthetase family. Phe-tRNA synthetase alpha subunit type 1 subfamily. In terms of assembly, tetramer of two alpha and two beta subunits. It depends on Mg(2+) as a cofactor.

Its subcellular location is the cytoplasm. It carries out the reaction tRNA(Phe) + L-phenylalanine + ATP = L-phenylalanyl-tRNA(Phe) + AMP + diphosphate + H(+). This is Phenylalanine--tRNA ligase alpha subunit from Lawsonia intracellularis (strain PHE/MN1-00).